Reading from the N-terminus, the 106-residue chain is RxLR effector protein PSR1 (106 aa).

Residues 1 to 20 (MRLTYVLLVAVTTLLVSCDA) form the signal peptide. Positions 33–46 (RLLRFVEAADEEER) match the RxLR-dEER motif. The interval 50 to 106 (FSPEKLRKMLGDETYRLKKFGKWDSDGHTFDGLKHYLLLSDSSMVKLRNMYKAWLEQ) is WY domain. The short motif at 56-69 (RKMLGDETYRLKKF) is the Bipartite nuclear localization signal (NLS) element.

The protein belongs to the RxLR effector family. In terms of assembly, interacts with host PINP1.

Its subcellular location is the secreted. The protein localises to the host nucleus. Secreted effector that possesses RNA silencing suppression activity by inhibiting the biogenesis of small RNAs in the host plant to promote enhanced susceptibility of host to the pathogen during infection. Interferes with secondary siRNA production by associating with host nuclear protein PINP1 that acts as a regulator of the accumulation of both microRNAs and endogenous small interfering RNAs. This is RxLR effector protein PSR1 from Phytophthora sojae (Soybean stem and root rot agent).